Reading from the N-terminus, the 222-residue chain is MGEPSKEEYKIQCFDAETQQLLKTALKDPGAVDLEKVANVIVDHSLQDSVFSKEAGRMCYAIIQAESKQAGQSVFRRGLLNRLQQEYQTREQLRARSLQGWVCYVTFICNIFDYLRVNNMPMMALVNPVYDCLFRLAQPDSLSKEEEVDCLVLQLHRVGEQLEKMNGQRMDELFVLIRDGFLLPAGLSSLAQLLLLEIIEFRAAGWKTTPAAHKYYYSEVSD.

Positions 3–205 (EPSKEEYKIQ…LEIIEFRAAG (203 aa)) constitute an MIF4G domain.

This sequence belongs to the MIF4GD family. In terms of assembly, interacts with EIF4G1, EIF4G2 and SLBP; probably tethered by SLBP to the 3'-end of mRNAs ending with the histone stem-loop, it also interacts with EIF4G1 which is bound to their 5'-end.

It localises to the cytoplasm. It is found in the nucleus. In terms of biological role, functions in replication-dependent translation of histone mRNAs which differ from other eukaryotic mRNAs in that they do not end with a poly-A tail but a stem-loop. May participate in circularizing those mRNAs specifically enhancing their translation. This Bos taurus (Bovine) protein is MIF4G domain-containing protein (MIF4GD).